Reading from the N-terminus, the 303-residue chain is Putative HTH-type transcriptional regulatory protein Mpal_0031 (303 aa).

The HTH cro/C1-type domain occupies 132–189; it reads LRGLREQRNMSLGDLGAVLGVSRRTISKYESGMGTTLEIAIKIEEVFDSGVIESIDLL. Residues 143–162 constitute a DNA-binding region (H-T-H motif); it reads LGDLGAVLGVSRRTISKYES.

This is Putative HTH-type transcriptional regulatory protein Mpal_0031 from Methanosphaerula palustris (strain ATCC BAA-1556 / DSM 19958 / E1-9c).